Consider the following 251-residue polypeptide: MSTSVAENKALSASGDVNASDASVPPELLTRHPLQNRWALWYLKADRNKEWEDCLKMVSLFDTVEDFWSLYNHIQSAGGLNWGSDYYLFKEGIKPMWEDVNNVQGGRWLVVVDKQKLQRRTQLLDHYWLELLMAIVGEQFDEYGDYICGAVVNVRQKGDKVSLWTRDATRDDVNLRIGQVLKQKLSIPDTEILRYEVHKDSSARTSSTVKPRICLPAKDPAPVKEKGPAATTSPSNPGTEATGTSPATPTP.

A disordered region spans residues 200-251; the sequence is DSSARTSSTVKPRICLPAKDPAPVKEKGPAATTSPSNPGTEATGTSPATPTP. A compositionally biased stretch (polar residues) spans 230–251; that stretch reads ATTSPSNPGTEATGTSPATPTP.

The protein belongs to the eukaryotic initiation factor 4E family. In terms of assembly, eIF4F is a multi-subunit complex, the composition of which varies with external and internal environmental conditions. It is composed of at least eIF4A, eIF4E and eIF4G. eIF4E is also known to interact with other partners. Interacts with mxt. Component of the pid-1 variant of the PETISCO complex (also called the pid-3, erh-2, tofu-6, and ife-3 small RNA complex) containing at least pid-1, tofu-6, ife-3, pid-3, and erh-2, which is required for the biogenesis of a class of 21 nucleotide PIWI-interacting RNAs (piRNAs) that possess a uracil residue at the 5'-end (also called 21U-RNAs). Component of the tost-1 variant of the PETISCO complex (also called the pid-3, erh-2, tofu-6, and ife-3 small RNA complex) containing at least tost-1, tofu-6, ife-3, pid-3, and erh-2, which plays an essential role in embryogenesis. Within the pid-1 and tost-1 variants of the PETISCO complexes interacts with tofu-6 (via C-terminus). In contrast to the pid-1 variant of the PETISCO complex, the tost-1 variant of the PETISCO complex plays a minor role in the biogenesis of 21U-RNAs. As to expression, highly expressed in the germline (at protein level).

The protein localises to the cytoplasmic granule. Its subcellular location is the cytoplasm. It localises to the perinuclear region. Its function is as follows. Recognizes and binds the 7-methylguanosine-containing mRNA cap during an early step in the initiation of protein synthesis and facilitates ribosome binding by inducing the unwinding of the mRNAs secondary structures. All 5 eIF4E proteins bind monomethyl cap structures. Only ife-1, ife-2 and ife-5 bind trimethyl cap structures which result from trans-splicing. Translation of trimethyl cap structure mRNAs may be regulated by intracellular redox state; disulfide bonds change the width and depth of the cap-binding cavity determining selectivity to mRNA caps. Ife-3 is essential for viability. Component of the pid-1 and tost-1 variants of the PETISCO complexes, which have roles in the biogenesis of a class of 21 nucleotide PIWI-interacting RNAs (piRNAs) that possess a uracil residue at the 5'-end (also called 21U-RNAs) and embryogenesis, respectively. Within the pid-1 variant of the PETISCO complex binds to capped 21U-RNA precursor molecules, possibly playing a role in the processing of the 5' end of the molecules to promote binding of other complex components such as pid-3. However, it is not essential for the biogenesis of 21U-RNAs by itself. Within the tost-1 variant of the PETISCO complex binds to splice leader SL1 RNA fragments to possibly play a role in their processing. The chain is Eukaryotic translation initiation factor 4E-3 from Caenorhabditis elegans.